Consider the following 710-residue polypeptide: Amyloid beta precursor protein binding family B member 1 (710 aa).

Serine 135 carries the post-translational modification Phosphoserine. Disordered regions lie at residues 143 to 256 and 276 to 300; these read EQGP…SDLP and GTTQ…ESQL. Acidic residues predominate over residues 145–173; it reads GPDEGEEKAAGEAEEDDEDEEEEEEEEDL. The residue at position 204 (lysine 204) is an N6-acetyllysine. A compositionally biased stretch (polar residues) spans 223–234; sequence SWATLSQGSPSY. The 33-residue stretch at 253 to 285 folds into the WW domain; sequence SDLPAGWMRVQDTSGTYYWHIPTGTTQWEPPGR. Over residues 287–299 the composition is skewed to low complexity; that stretch reads SPSQGSSPQEESQ. The PID 1 domain occupies 370–509; sequence FAVRSLGWVE…SKIMSERRNA (140 aa). The residue at position 459 (serine 459) is a Phosphoserine; by PKC. Serine 517 carries the phosphoserine modification. One can recognise a PID 2 domain in the interval 542-699; that stretch reads KFQVYYLGNV…RRGVQSLWGS (158 aa). Tyrosine 547 carries the post-translational modification Phosphotyrosine; by ABL1. The residue at position 610 (serine 610) is a Phosphoserine; by SGK1. N6-acetyllysine is present on lysine 701.

Component of a complex, at least composed of APBB1, RASD1/DEXRAS1 and APP. Interacts (via PID domain 2) with APP (with the intracellular domain of the amyloid-beta precursor protein). Interacts (via PID domain 2) with RASD1/DEXRAS1; impairs the transcription activation activity. Interacts (via PID domain 1) with KAT5/TIP60. Interacts (via the WW domain) with the proline-rich region of APBB1IP. Interacts with TSHZ1 and TSHZ2. Interacts (via the WW domain) with histone H2AX (when phosphorylated on 'Tyr-142') and the proline-rich region of ENAH. Interacts with MAPK8. Interacts (via PID domain 1) with TSHZ3 (via homeobox domain). Interacts with SET. Found in a trimeric complex with HDAC1 and TSHZ3; the interaction between HDAC1 and APBB1 is mediated by TSHZ3. Interacts (via WWW domain) with NEK6. Interacts (via WWW domain) with ABL1. Interacts with RNF157. Interacts with ARF6. In terms of processing, polyubiquitination by RNF157 leads to degradation by the proteasome. Post-translationally, phosphorylation at Ser-610 by SGK1 promotes its localization to the nucleus. Phosphorylated following nuclear translocation. Phosphorylation at Tyr-546 by ABL1 enhances transcriptional activation activity and reduces the affinity for RASD1/DEXRAS1. Acetylation at Lys-204 and Lys-701 by KAT5 promotes its transcription activator activity. Phosphorylated at Ser-459 by PKC upon insulin activation. As to expression, expressed in the brain, retinal lens and muscle cells (at protein level).

The protein localises to the cell membrane. Its subcellular location is the cytoplasm. It localises to the nucleus. It is found in the cell projection. The protein resides in the growth cone. The protein localises to the nucleus speckle. Functionally, transcription coregulator that can have both coactivator and corepressor functions. Adapter protein that forms a transcriptionally active complex with the gamma-secretase-derived amyloid precursor protein (APP) intracellular domain. Plays a central role in the response to DNA damage by translocating to the nucleus and inducing apoptosis. May act by specifically recognizing and binding histone H2AX phosphorylated on 'Tyr-142' (H2AXY142ph) at double-strand breaks (DSBs), recruiting other pro-apoptosis factors such as MAPK8/JNK1. Required for histone H4 acetylation at double-strand breaks (DSBs). Its ability to specifically bind modified histones and chromatin modifying enzymes such as KAT5/TIP60, probably explains its transcription activation activity. Functions in association with TSHZ3, SET and HDAC factors as a transcriptional repressor, that inhibits the expression of CASP4. Associates with chromatin in a region surrounding the CASP4 transcriptional start site(s). Involved in hippocampal neurite branching and neuromuscular junction formation, as a result plays a role in spatial memory functioning. Plays a role in the maintenance of lens transparency. May play a role in muscle cell strength. Acts as a molecular adapter that functions in neurite outgrowth by activating the RAC1-ARF6 axis upon insulin treatment. This is Amyloid beta precursor protein binding family B member 1 from Mus musculus (Mouse).